The chain runs to 274 residues: tRNA dimethylallyltransferase (274 aa).

The tract at residues 9 to 12 (DSLS) is interaction with substrate tRNA.

This sequence belongs to the IPP transferase family. Monomer. Mg(2+) is required as a cofactor.

It carries out the reaction adenosine(37) in tRNA + dimethylallyl diphosphate = N(6)-dimethylallyladenosine(37) in tRNA + diphosphate. Its function is as follows. Catalyzes the transfer of a dimethylallyl group onto the adenine at position 37 in tRNAs that read codons beginning with uridine, leading to the formation of N6-(dimethylallyl)adenosine (i(6)A). The sequence is that of tRNA dimethylallyltransferase (miaA) from Helicobacter pylori (strain P12).